A 513-amino-acid chain; its full sequence is ATP synthase subunit alpha (513 aa).

169 to 176 (GDRQTGKT) is a binding site for ATP.

It belongs to the ATPase alpha/beta chains family. In terms of assembly, F-type ATPases have 2 components, CF(1) - the catalytic core - and CF(0) - the membrane proton channel. CF(1) has five subunits: alpha(3), beta(3), gamma(1), delta(1), epsilon(1). CF(0) has three main subunits: a(1), b(2) and c(9-12). The alpha and beta chains form an alternating ring which encloses part of the gamma chain. CF(1) is attached to CF(0) by a central stalk formed by the gamma and epsilon chains, while a peripheral stalk is formed by the delta and b chains.

Its subcellular location is the cell inner membrane. It carries out the reaction ATP + H2O + 4 H(+)(in) = ADP + phosphate + 5 H(+)(out). Produces ATP from ADP in the presence of a proton gradient across the membrane. The alpha chain is a regulatory subunit. The polypeptide is ATP synthase subunit alpha (Haemophilus ducreyi (strain 35000HP / ATCC 700724)).